An 862-amino-acid chain; its full sequence is MIKKQERMYTSGEIHSILHPWVSEWFRRTFDDFTEAQRYAIMDIHRGRNVLVSSPTGSGKTLTAFLSIISELTRLADDGELEDSVYCIYISPLKALDNDIERNLEEPLSAIRDIAAGEGRDLEIRKAVRTGDTTSYERSRMLKKPPHILITTPETLSILLVAPKFREKLSTVRYVIVDEIHSLADNKRGVHLSLSLERLQHLVGDFTRIGLSATVHPLERVARFLVGYSYGSERECLIVDVSYLKELDIDLICPVDDIVAADPEEIGNALYDILHDLIEDHRTTLIFTNTRSGTESVVYNLKSRFPESYSDSNIMAHHSSLSREIRLETEEKLKRGELKAVVSSTSLELGIDIGYIDLVVLLSSPKSVSRALQRIGRSGHQLHQRSKGRIVVVDRDDLVECSLILKNALEGKIDSIKVPENCLDVLAQHIYGMAIENPWDIDHALAVIRNSYCYRNLSREDYLSVLSYLAGEYVELEERYVYAKIWVDYDKNQFGKRGKLARMLYSTNIGTIPDRSAAVVKCGGKVVGRIEEDFMEKLRKGDTFVLGGRIYRFNYARGMTVNVTPASGPPTIPSWFSEQLPLSFDLALDIQRFRDIMDGKFQYGRSRDEIMEFIMSYLHVDERAASSIYEYFREQYLYAGIPSIRRMLVEYYTGFGGRKFIVFHSLFGRRVNDAISRAVAYVIARRYRRDVMISVSDNGFYLSSEGKMGGLEAFRELEPENLRNVLKKALDRTETLASRFRHCAGRALMILRRYRGEEKSVGRQQVRGKILLKFVSELDDKFPILEEARREVMEDYMDIENAIRVLEWIRDGDMEIKQINTRIPSPFAFNLVAQGYLDVLKYEDRIEFIRRMHQAIIDEIKR.

ATP-binding residues include Q37, K60, T61, D178, E179, V360, R377, and H380. The 193-residue stretch at 41–233 folds into the Helicase ATP-binding domain; it reads IMDIHRGRNV…FLVGYSYGSE (193 aa). The DEAH box signature appears at 178 to 181; the sequence is DEIH. The Helicase C-terminal domain maps to 269-424; that stretch reads ALYDILHDLI…SIKVPENCLD (156 aa). The tract at residues 425 to 513 is WH domain; sequence VLAQHIYGMA…LYSTNIGTIP (89 aa). The interval 514 to 862 is domain 4; that stretch reads DRSAAVVKCG…HQAIIDEIKR (349 aa).

This sequence belongs to the Lhr helicase family. Lhr-Core subfamily. As to quaternary structure, monomer.

It carries out the reaction Couples ATP hydrolysis with the unwinding of duplex DNA by translocating in the 3'-5' direction.. The enzyme catalyses ATP + H2O = ADP + phosphate + H(+). Functionally, DNA helicase that translocates in a 3'-5' direction on single-stranded (ss)DNA, probably involved in DNA repair. Most active on three- or four-stranded forked DNA; flayed structures and Holliday junction (HJ) substrates are unwound slightly less well. Also unwinds 3'-tailed duplexes; both RNA:DNA hybrids and double-stranded (ds)DNA with a 3'-single strand (ss)DNA loading strand are unwound. Substrates where the helicase loads on a 3'-ssRNA tail (DNA:RNA and RNA:RNA) were not tested. Blunt-ended dsDNA is not a substrate. Probably involved in replication-coupled DNA repair; remodeling of fork DNA after binding by Lhr generates ssDNA for ATP-dependent DNA translocation. The protein is ATP-dependent helicase Lhr-Core of Methanothermobacter thermautotrophicus (strain ATCC 29096 / DSM 1053 / JCM 10044 / NBRC 100330 / Delta H) (Methanobacterium thermoautotrophicum).